We begin with the raw amino-acid sequence, 353 residues long: Phosphoribosylformylglycinamidine cyclo-ligase (353 aa).

This sequence belongs to the AIR synthase family.

The protein localises to the cytoplasm. The enzyme catalyses 2-formamido-N(1)-(5-O-phospho-beta-D-ribosyl)acetamidine + ATP = 5-amino-1-(5-phospho-beta-D-ribosyl)imidazole + ADP + phosphate + H(+). The protein operates within purine metabolism; IMP biosynthesis via de novo pathway; 5-amino-1-(5-phospho-D-ribosyl)imidazole from N(2)-formyl-N(1)-(5-phospho-D-ribosyl)glycinamide: step 2/2. The protein is Phosphoribosylformylglycinamidine cyclo-ligase of Magnetococcus marinus (strain ATCC BAA-1437 / JCM 17883 / MC-1).